A 293-amino-acid chain; its full sequence is Glutamyl-Q tRNA(Asp) synthetase (293 aa).

L-glutamate-binding positions include 8–12 (RFAPT) and glutamate 44. The short motif at 11-21 (PTPSGYLHFGS) is the 'HIGH' region element. The Zn(2+) site is built by cysteine 100, cysteine 102, tyrosine 114, and cysteine 118. L-glutamate-binding residues include tyrosine 171 and arginine 189. Residues 227–231 (KLGKS) carry the 'KMSKS' region motif. Lysine 230 contacts ATP.

Belongs to the class-I aminoacyl-tRNA synthetase family. GluQ subfamily. Zn(2+) serves as cofactor.

In terms of biological role, catalyzes the tRNA-independent activation of glutamate in presence of ATP and the subsequent transfer of glutamate onto a tRNA(Asp). Glutamate is transferred on the 2-amino-5-(4,5-dihydroxy-2-cyclopenten-1-yl) moiety of the queuosine in the wobble position of the QUC anticodon. The chain is Glutamyl-Q tRNA(Asp) synthetase from Pseudomonas paraeruginosa (strain DSM 24068 / PA7) (Pseudomonas aeruginosa (strain PA7)).